The chain runs to 288 residues: ATP synthase gamma chain (288 aa).

This sequence belongs to the ATPase gamma chain family. F-type ATPases have 2 components, CF(1) - the catalytic core - and CF(0) - the membrane proton channel. CF(1) has five subunits: alpha(3), beta(3), gamma(1), delta(1), epsilon(1). CF(0) has three main subunits: a, b and c.

It localises to the cell inner membrane. Produces ATP from ADP in the presence of a proton gradient across the membrane. The gamma chain is believed to be important in regulating ATPase activity and the flow of protons through the CF(0) complex. This chain is ATP synthase gamma chain, found in Legionella pneumophila (strain Corby).